Consider the following 495-residue polypeptide: MTANNANKKHLLVLGTASHVGKSAIVTALCRIFSADHKVAPFKAQNMSLNSWITVDGKEIGIAQAIQAKAAGVEPTADMNPVLLKPKGDRVSQVILLGEPYADKSAGAYYDSIEETHDVLKGALKRLEAEYDLIVMEGAGGAAEINLYDRDIVNIGTARITDAPIILVGDIERGGVFASLYGTIQLLPEDVRKNVRGLIINKFRGDPAILESGLTELEELTGIPVLGVMPYFKLRIPSEDSVSIGDKSADDGEHYDVDIAVIRLTRISNFTDFEPLEHMAKVRYVDLSDDLGNPDAIIIPGTKNTTSDLNDLVESGMADKIKSFYGMVPILGICGGYQMLGKSIVDSGIEGGESARLDGLGLLDIETVFDAYEKRTVQVTKTVKESGPIFDSIKGEDVKGYEIHMGISSSKRPVFGDDGCADDSGLVIGTYLHGLFDNVNIRRALISYLLEKKGLEFKEEEIPDKDPYDELADVARENLDMNKIYGMIGLEPEKV.

One can recognise a GATase cobBQ-type domain in the interval D256 to I441. C334 functions as the Nucleophile in the catalytic mechanism. H433 is an active-site residue.

The protein belongs to the CobB/CobQ family. CobQ subfamily.

It functions in the pathway cofactor biosynthesis; adenosylcobalamin biosynthesis. Catalyzes amidations at positions B, D, E, and G on adenosylcobyrinic A,C-diamide. NH(2) groups are provided by glutamine, and one molecule of ATP is hydrogenolyzed for each amidation. This is Probable cobyric acid synthase from Methanococcoides burtonii (strain DSM 6242 / NBRC 107633 / OCM 468 / ACE-M).